Consider the following 121-residue polypeptide: Phosphoribosyl-AMP cyclohydrolase (121 aa).

D76 contacts Mg(2+). C77 lines the Zn(2+) pocket. Residues D78 and D80 each coordinate Mg(2+). Zn(2+) is bound by residues C93 and C100.

It belongs to the PRA-CH family. As to quaternary structure, homodimer. The cofactor is Mg(2+). It depends on Zn(2+) as a cofactor.

The protein localises to the cytoplasm. It catalyses the reaction 1-(5-phospho-beta-D-ribosyl)-5'-AMP + H2O = 1-(5-phospho-beta-D-ribosyl)-5-[(5-phospho-beta-D-ribosylamino)methylideneamino]imidazole-4-carboxamide. Its pathway is amino-acid biosynthesis; L-histidine biosynthesis; L-histidine from 5-phospho-alpha-D-ribose 1-diphosphate: step 3/9. In terms of biological role, catalyzes the hydrolysis of the adenine ring of phosphoribosyl-AMP. This is Phosphoribosyl-AMP cyclohydrolase from Paracoccus denitrificans (strain Pd 1222).